The following is a 285-amino-acid chain: Phosphatidylglycerol--prolipoprotein diacylglyceryl transferase (285 aa).

4 helical membrane-spanning segments follow: residues 30-50, 67-87, 103-123, and 129-149; these read LEIR…HWHI, LMLW…ILLY, WHGG…VSIV, and VRVM…LFLG. A 1,2-diacyl-sn-glycero-3-phospho-(1'-sn-glycerol) is bound at residue R150. A run of 3 helical transmembrane segments spans residues 184–204, 213–233, and 252–272; these read SQVY…SILA, FGVL…AVEF, and GQVL…LTVL.

Belongs to the Lgt family.

Its subcellular location is the cell inner membrane. It carries out the reaction L-cysteinyl-[prolipoprotein] + a 1,2-diacyl-sn-glycero-3-phospho-(1'-sn-glycerol) = an S-1,2-diacyl-sn-glyceryl-L-cysteinyl-[prolipoprotein] + sn-glycerol 1-phosphate + H(+). Its pathway is protein modification; lipoprotein biosynthesis (diacylglyceryl transfer). In terms of biological role, catalyzes the transfer of the diacylglyceryl group from phosphatidylglycerol to the sulfhydryl group of the N-terminal cysteine of a prolipoprotein, the first step in the formation of mature lipoproteins. This is Phosphatidylglycerol--prolipoprotein diacylglyceryl transferase from Anaplasma marginale (strain Florida).